The following is a 257-amino-acid chain: 5-oxoprolinase subunit A (257 aa).

Belongs to the LamB/PxpA family. In terms of assembly, forms a complex composed of PxpA, PxpB and PxpC.

The enzyme catalyses 5-oxo-L-proline + ATP + 2 H2O = L-glutamate + ADP + phosphate + H(+). Catalyzes the cleavage of 5-oxoproline to form L-glutamate coupled to the hydrolysis of ATP to ADP and inorganic phosphate. In Bacillus subtilis (strain 168), this protein is 5-oxoprolinase subunit A.